Reading from the N-terminus, the 108-residue chain is Colipase B (108 aa).

The signal sequence occupies residues 1–13 (LALLLVALAVAYA). A propeptide spans 14–18 (VPDPR) (enterostatin, activation peptide). 5 cysteine pairs are disulfide-bonded: Cys-30–Cys-41, Cys-36–Cys-52, Cys-40–Cys-74, Cys-62–Cys-82, and Cys-76–Cys-100. Position 65 (Trp-65) interacts with taurodeoxycholate.

It belongs to the colipase family. In terms of assembly, forms a 1:1 stoichiometric complex with pancreatic lipase. In terms of tissue distribution, expressed by the pancreas.

It localises to the secreted. Functionally, colipase is a cofactor of pancreatic lipase. It allows the lipase to anchor itself to the lipid-water interface. Without colipase the enzyme is washed off by bile salts, which have an inhibitory effect on the lipase. In terms of biological role, enterostatin has a biological activity as a satiety signal. This is Colipase B (CLPS2) from Equus caballus (Horse).